A 166-amino-acid chain; its full sequence is MTESTSRRPAYARLLDRAVRILAVRDHSEQELRRKLAAPIMGKNGPEEIDATAEDYERVIAWCHEHGYLDDSRFVARFIASRSRKGYGPARIRQELNQKGISREATEKAMRECDIDWCALARDQATRKYDEPLPTVFSEKVKIQRFLLYRGYLMEDIQDIWRNFAD.

The protein belongs to the RecX family.

It localises to the cytoplasm. Modulates RecA activity. This chain is Regulatory protein RecX, found in Shigella boydii serotype 4 (strain Sb227).